The chain runs to 198 residues: Peptidyl-tRNA hydrolase (198 aa).

TRNA is bound at residue Tyr-15. The active-site Proton acceptor is the His-20. TRNA is bound by residues Phe-66, Asn-68, and Asn-114.

It belongs to the PTH family. In terms of assembly, monomer.

The protein resides in the cytoplasm. The catalysed reaction is an N-acyl-L-alpha-aminoacyl-tRNA + H2O = an N-acyl-L-amino acid + a tRNA + H(+). Functionally, hydrolyzes ribosome-free peptidyl-tRNAs (with 1 or more amino acids incorporated), which drop off the ribosome during protein synthesis, or as a result of ribosome stalling. Its function is as follows. Catalyzes the release of premature peptidyl moieties from peptidyl-tRNA molecules trapped in stalled 50S ribosomal subunits, and thus maintains levels of free tRNAs and 50S ribosomes. This chain is Peptidyl-tRNA hydrolase, found in Cupriavidus taiwanensis (strain DSM 17343 / BCRC 17206 / CCUG 44338 / CIP 107171 / LMG 19424 / R1) (Ralstonia taiwanensis (strain LMG 19424)).